We begin with the raw amino-acid sequence, 292 residues long: Putative xanthine dehydrogenase FAD-binding subunit XdhB (292 aa).

The FAD-binding PCMH-type domain occupies 1 to 176 (MFDFASYHRA…VAFHFPPQPK (176 aa)). Residues 27–34 (KLLAGGTD), 109–113 (ATYGG), I165, and F184 each bind FAD.

Heterotrimer of XdhA, XdhB and XdhC. The cofactor is FAD.

The catalysed reaction is xanthine + NAD(+) + H2O = urate + NADH + H(+). The enzyme catalyses hypoxanthine + NAD(+) + H2O = xanthine + NADH + H(+). It participates in purine metabolism; hypoxanthine degradation; urate from hypoxanthine: step 1/2. Its pathway is purine metabolism; hypoxanthine degradation; urate from hypoxanthine: step 2/2. Functionally, presumed to be a dehydrogenase, but possibly an oxidase. Participates in limited purine salvage (requires aspartate) but does not support aerobic growth on purines as the sole carbon source (purine catabolism). This is Putative xanthine dehydrogenase FAD-binding subunit XdhB (xdhB) from Escherichia coli (strain K12).